The sequence spans 166 residues: Large ribosomal subunit protein uL10 (166 aa).

This sequence belongs to the universal ribosomal protein uL10 family. Part of the ribosomal stalk of the 50S ribosomal subunit. The N-terminus interacts with L11 and the large rRNA to form the base of the stalk. The C-terminus forms an elongated spine to which L12 dimers bind in a sequential fashion forming a multimeric L10(L12)X complex.

Its function is as follows. Forms part of the ribosomal stalk, playing a central role in the interaction of the ribosome with GTP-bound translation factors. This Mesoplasma florum (strain ATCC 33453 / NBRC 100688 / NCTC 11704 / L1) (Acholeplasma florum) protein is Large ribosomal subunit protein uL10.